Consider the following 570-residue polypeptide: Urease subunit alpha (570 aa).

A Urease domain is found at 131–570; that stretch reads GGMDSHIHFI…LPMAQRYFLF (440 aa). Ni(2+) contacts are provided by H136, H138, and K219. K219 bears the N6-carboxylysine mark. H221 contributes to the substrate binding site. Positions 248 and 274 each coordinate Ni(2+). H322 functions as the Proton donor in the catalytic mechanism. Residue D362 participates in Ni(2+) binding.

This sequence belongs to the metallo-dependent hydrolases superfamily. Urease alpha subunit family. As to quaternary structure, heterotrimer of UreA (gamma), UreB (beta) and UreC (alpha) subunits. Three heterotrimers associate to form the active enzyme. The cofactor is Ni cation. In terms of processing, carboxylation allows a single lysine to coordinate two nickel ions.

The protein localises to the cytoplasm. It catalyses the reaction urea + 2 H2O + H(+) = hydrogencarbonate + 2 NH4(+). The protein operates within nitrogen metabolism; urea degradation; CO(2) and NH(3) from urea (urease route): step 1/1. The sequence is that of Urease subunit alpha from Rhizobium johnstonii (strain DSM 114642 / LMG 32736 / 3841) (Rhizobium leguminosarum bv. viciae).